Here is a 174-residue protein sequence, read N- to C-terminus: N5-carboxyaminoimidazole ribonucleotide mutase (174 aa).

Ser-15, Asp-18, and Arg-45 together coordinate substrate.

This sequence belongs to the AIR carboxylase family. Class I subfamily.

It catalyses the reaction 5-carboxyamino-1-(5-phospho-D-ribosyl)imidazole + H(+) = 5-amino-1-(5-phospho-D-ribosyl)imidazole-4-carboxylate. The protein operates within purine metabolism; IMP biosynthesis via de novo pathway; 5-amino-1-(5-phospho-D-ribosyl)imidazole-4-carboxylate from 5-amino-1-(5-phospho-D-ribosyl)imidazole (N5-CAIR route): step 2/2. Its function is as follows. Catalyzes the conversion of N5-carboxyaminoimidazole ribonucleotide (N5-CAIR) to 4-carboxy-5-aminoimidazole ribonucleotide (CAIR). The sequence is that of N5-carboxyaminoimidazole ribonucleotide mutase from Pyrococcus abyssi (strain GE5 / Orsay).